Reading from the N-terminus, the 246-residue chain is 3-deoxy-manno-octulosonate cytidylyltransferase (246 aa).

Belongs to the KdsB family.

The protein resides in the cytoplasm. It carries out the reaction 3-deoxy-alpha-D-manno-oct-2-ulosonate + CTP = CMP-3-deoxy-beta-D-manno-octulosonate + diphosphate. The protein operates within nucleotide-sugar biosynthesis; CMP-3-deoxy-D-manno-octulosonate biosynthesis; CMP-3-deoxy-D-manno-octulosonate from 3-deoxy-D-manno-octulosonate and CTP: step 1/1. It participates in bacterial outer membrane biogenesis; lipopolysaccharide biosynthesis. Activates KDO (a required 8-carbon sugar) for incorporation into bacterial lipopolysaccharide in Gram-negative bacteria. This chain is 3-deoxy-manno-octulosonate cytidylyltransferase, found in Bradyrhizobium sp. (strain ORS 278).